A 92-amino-acid chain; its full sequence is uncharacterized protein (92 aa).

The tract at residues 25–53 (AGRGVRREARDTPCRGTAEGLATSQPEDG) is disordered.

This is an uncharacterized protein from Treponema pallidum (strain Nichols).